Here is a 124-residue protein sequence, read N- to C-terminus: Replication restart protein PriB (124 aa).

In terms of domain architecture, SSB spans Ile12–Asp112.

It belongs to the PriB family. In terms of assembly, homodimer. Interacts with PriA and DnaT. Component of the replication restart primosome. Primosome assembly occurs via a 'hand-off' mechanism. PriA binds to replication forks, subsequently PriB then DnaT bind; DnaT then displaces ssDNA to generate the helicase loading substrate.

Functionally, involved in the restart of stalled replication forks, which reloads the replicative helicase on sites other than the origin of replication; the PriA-PriB pathway is the major replication restart pathway. During primosome assembly it facilitates complex formation between PriA and DnaT on DNA; stabilizes PriA on DNA. Stimulates the DNA unwinding activity of PriA helicase. The protein is Replication restart protein PriB of Actinobacillus pleuropneumoniae serotype 5b (strain L20).